Here is a 376-residue protein sequence, read N- to C-terminus: Chaperone protein DnaJ (376 aa).

Residues aspartate 5 to glycine 70 enclose the J domain. Residues glycine 131–serine 209 form a CR-type zinc finger. Zn(2+) is bound by residues cysteine 144, cysteine 147, cysteine 161, cysteine 164, cysteine 183, cysteine 186, cysteine 197, and cysteine 200. CXXCXGXG motif repeat units follow at residues cysteine 144–glycine 151, cysteine 161–glycine 168, cysteine 183–glycine 190, and cysteine 197–glycine 204.

This sequence belongs to the DnaJ family. In terms of assembly, homodimer. Requires Zn(2+) as cofactor.

It is found in the cytoplasm. Functionally, participates actively in the response to hyperosmotic and heat shock by preventing the aggregation of stress-denatured proteins and by disaggregating proteins, also in an autonomous, DnaK-independent fashion. Unfolded proteins bind initially to DnaJ; upon interaction with the DnaJ-bound protein, DnaK hydrolyzes its bound ATP, resulting in the formation of a stable complex. GrpE releases ADP from DnaK; ATP binding to DnaK triggers the release of the substrate protein, thus completing the reaction cycle. Several rounds of ATP-dependent interactions between DnaJ, DnaK and GrpE are required for fully efficient folding. Also involved, together with DnaK and GrpE, in the DNA replication of plasmids through activation of initiation proteins. In Yersinia enterocolitica serotype O:8 / biotype 1B (strain NCTC 13174 / 8081), this protein is Chaperone protein DnaJ.